A 590-amino-acid chain; its full sequence is Arginine--tRNA ligase (590 aa).

The short motif at 130–140 (ANPTGPMHVGH) is the 'HIGH' region element.

This sequence belongs to the class-I aminoacyl-tRNA synthetase family. In terms of assembly, monomer.

Its subcellular location is the cytoplasm. The enzyme catalyses tRNA(Arg) + L-arginine + ATP = L-arginyl-tRNA(Arg) + AMP + diphosphate. In Methylobacterium nodulans (strain LMG 21967 / CNCM I-2342 / ORS 2060), this protein is Arginine--tRNA ligase.